We begin with the raw amino-acid sequence, 72 residues long: Large ribosomal subunit protein bL28 (72 aa).

It belongs to the bacterial ribosomal protein bL28 family.

The polypeptide is Large ribosomal subunit protein bL28 (Chlorobium luteolum (strain DSM 273 / BCRC 81028 / 2530) (Pelodictyon luteolum)).